Here is a 545-residue protein sequence, read N- to C-terminus: Probable sucrose-6-phosphate hydrolase (545 aa).

Residues 107-110, glutamine 126, 169-170, 230-231, and glutamate 285 contribute to the substrate site; these read LLND, FS, and RD. The active site involves aspartate 110.

This sequence belongs to the glycosyl hydrolase 32 family.

Its subcellular location is the cytoplasm. It catalyses the reaction Hydrolysis of terminal non-reducing beta-D-fructofuranoside residues in beta-D-fructofuranosides.. Its pathway is glycan biosynthesis; sucrose metabolism. Enables the bacterium to metabolize sucrose as a sole carbon source. The sequence is that of Probable sucrose-6-phosphate hydrolase from Psychromonas ingrahamii (strain DSM 17664 / CCUG 51855 / 37).